Reading from the N-terminus, the 403-residue chain is Leu/Ile/Val-binding protein homolog 8 (403 aa).

Positions 1–26 are cleaved as a signal peptide; sequence MRLSRLLIGASLGVALSSTAFTAALA.

The protein belongs to the leucine-binding protein family.

In terms of biological role, component of an amino-acid transport system. In Brucella suis biovar 1 (strain 1330), this protein is Leu/Ile/Val-binding protein homolog 8.